Reading from the N-terminus, the 179-residue chain is MASILSPVPVLAAGGIADINPGLTLWTAITFLVMLAVLAKFAWGPIVKMLAERERSIREAIDSAKKERAEAERLLAAQKESLSKAQREAAELARRNQQEVEALRQELTAKARKEADELVAEARRQIAEELVKAKAELKAQVVDLAIDAASRLVKANLDEKSQRALVEEYIAQLPANRAA.

The chain crosses the membrane as a helical span at residues 27–47 (TAITFLVMLAVLAKFAWGPIV).

It belongs to the ATPase B chain family. In terms of assembly, F-type ATPases have 2 components, F(1) - the catalytic core - and F(0) - the membrane proton channel. F(1) has five subunits: alpha(3), beta(3), gamma(1), delta(1), epsilon(1). F(0) has three main subunits: a(1), b(2) and c(10-14). The alpha and beta chains form an alternating ring which encloses part of the gamma chain. F(1) is attached to F(0) by a central stalk formed by the gamma and epsilon chains, while a peripheral stalk is formed by the delta and b chains.

It localises to the cell inner membrane. In terms of biological role, f(1)F(0) ATP synthase produces ATP from ADP in the presence of a proton or sodium gradient. F-type ATPases consist of two structural domains, F(1) containing the extramembraneous catalytic core and F(0) containing the membrane proton channel, linked together by a central stalk and a peripheral stalk. During catalysis, ATP synthesis in the catalytic domain of F(1) is coupled via a rotary mechanism of the central stalk subunits to proton translocation. Functionally, component of the F(0) channel, it forms part of the peripheral stalk, linking F(1) to F(0). The sequence is that of ATP synthase subunit b from Anaeromyxobacter dehalogenans (strain 2CP-C).